Here is a 489-residue protein sequence, read N- to C-terminus: Ent-kaurenoic acid oxidase 2 (489 aa).

Residues 5–25 form a helical membrane-spanning segment; that stretch reads GLILMWFPLIILGLFVLKWVL. C436 provides a ligand contact to heme.

The protein belongs to the cytochrome P450 family. Heme is required as a cofactor. In terms of tissue distribution, widely expressed. Highly expressed in influorescence stem, influorescence, and silique tissue. Weakly expressed in cauline and rosette leaves. Expressed at a weaker level in stem and influorescence than AtKAO1/CYP88A3.

It localises to the endoplasmic reticulum membrane. It catalyses the reaction ent-kaur-16-en-19-oate + 3 reduced [NADPH--hemoprotein reductase] + 3 O2 = gibberellin A12 + 3 oxidized [NADPH--hemoprotein reductase] + 4 H2O + 4 H(+). The catalysed reaction is ent-kaur-16-en-19-oate + reduced [NADPH--hemoprotein reductase] + O2 = ent-7alpha-hydroxykaur-16-en-19-oate + oxidized [NADPH--hemoprotein reductase] + H2O + H(+). It carries out the reaction ent-7alpha-hydroxykaur-16-en-19-oate + reduced [NADPH--hemoprotein reductase] + O2 = gibberellin A12 aldehyde + oxidized [NADPH--hemoprotein reductase] + 2 H2O + H(+). The enzyme catalyses gibberellin A12 aldehyde + reduced [NADPH--hemoprotein reductase] + O2 = gibberellin A12 + oxidized [NADPH--hemoprotein reductase] + H2O + 2 H(+). It participates in plant hormone biosynthesis; gibberellin biosynthesis. Functionally, catalyzes three successive oxidations of ent-kaurenoic acid giving gibberellin 12 (GA12), a key step in gibberellins (GAs) biosynthesis. GAs, which are involved many processes, including stem elongation, play a central role in plant development. In Arabidopsis thaliana (Mouse-ear cress), this protein is Ent-kaurenoic acid oxidase 2.